Consider the following 340-residue polypeptide: Ferredoxin--NADP reductase (340 aa).

FAD is bound by residues D33, Q41, Y46, A86, F120, D286, and T327.

The protein belongs to the ferredoxin--NADP reductase type 2 family. As to quaternary structure, homodimer. FAD is required as a cofactor.

It carries out the reaction 2 reduced [2Fe-2S]-[ferredoxin] + NADP(+) + H(+) = 2 oxidized [2Fe-2S]-[ferredoxin] + NADPH. The sequence is that of Ferredoxin--NADP reductase from Rickettsia rickettsii (strain Iowa).